Here is a 1045-residue protein sequence, read N- to C-terminus: Isoleucine--tRNA ligase (1045 aa).

The 'HIGH' region signature appears at 49-59 (PYCSGRIHLGT). Residues 591 to 595 (KMSKS) carry the 'KMSKS' region motif. Position 594 (Lys594) interacts with ATP.

This sequence belongs to the class-I aminoacyl-tRNA synthetase family. IleS type 2 subfamily. As to quaternary structure, monomer. Zn(2+) serves as cofactor.

It localises to the cytoplasm. It carries out the reaction tRNA(Ile) + L-isoleucine + ATP = L-isoleucyl-tRNA(Ile) + AMP + diphosphate. Functionally, catalyzes the attachment of isoleucine to tRNA(Ile). As IleRS can inadvertently accommodate and process structurally similar amino acids such as valine, to avoid such errors it has two additional distinct tRNA(Ile)-dependent editing activities. One activity is designated as 'pretransfer' editing and involves the hydrolysis of activated Val-AMP. The other activity is designated 'posttransfer' editing and involves deacylation of mischarged Val-tRNA(Ile). The protein is Isoleucine--tRNA ligase of Methanothermobacter marburgensis (strain ATCC BAA-927 / DSM 2133 / JCM 14651 / NBRC 100331 / OCM 82 / Marburg) (Methanobacterium thermoautotrophicum).